We begin with the raw amino-acid sequence, 297 residues long: MATH domain and coiled-coil domain-containing protein At2g05420 (297 aa).

One can recognise an MATH domain in the interval 7–139 (SKTITWVIEN…NGELTLVAKV (133 aa)). A coiled-coil region spans residues 239–281 (KLDWLEKKHGEIKEKKKKEEASLKRLQEMEKQIFNEAQIYKEK).

The protein is MATH domain and coiled-coil domain-containing protein At2g05420 of Arabidopsis thaliana (Mouse-ear cress).